The sequence spans 343 residues: MSISNDSLASTVPGDELPSSYPVFSSDFSYIKPSHVLDVVTVTSTAGPEATDDPSYSGFYSTVISTQNPEPTSASTPPSASASSLPNGAQKHNHTGVIAGPIVGVLGGLIVLVIIFYCLRHFKRKKFLAEQQEFERQFEEEKSRLAAVRKNTEQEKMGYRGGYQMHSTPWASSPRNSTIPQRSQSFYNDTRRSSDLGANAADFVTPPGNVANSDNIRILKRNSIATIGNYRSPSALEKRRSISYGAVQSVQGRPLAPIPGRRPLSISSDLYNDSNSGSHSNDDSDETKLKQSSTESSSELLDEKDKFDKNSLNDPFVTIRKSSYEHEISEEHKKHSKKRSEHF.

Residues threonine 66–alanine 89 are disordered. A compositionally biased stretch (low complexity) spans proline 71 to serine 84. Residues glycine 96–phenylalanine 116 traverse the membrane as a helical segment. Disordered stretches follow at residues glycine 161–arginine 191 and glycine 252–phenylalanine 343. The segment covering methionine 165–asparagine 188 has biased composition (polar residues). Over residues serine 280–leucine 289 the composition is skewed to basic and acidic residues. A compositionally biased stretch (low complexity) spans lysine 290–glutamate 299. Basic and acidic residues-rich tracts occupy residues leucine 301 to serine 311 and serine 322 to lysine 333. A compositionally biased stretch (basic residues) spans lysine 334–phenylalanine 343.

Its subcellular location is the golgi apparatus membrane. This is an uncharacterized protein from Schizosaccharomyces pombe (strain 972 / ATCC 24843) (Fission yeast).